A 204-amino-acid polypeptide reads, in one-letter code: Protein XpaC (204 aa).

Functionally, in double copy it causes aberrant cell morphology, filamentation and inhibits sporulation. Hydrolyzes 5-bromo-4-chloroindolyl phosphate. The polypeptide is Protein XpaC (xpaC) (Bacillus subtilis (strain 168)).